Consider the following 289-residue polypeptide: 4-hydroxy-tetrahydrodipicolinate synthase (289 aa).

Pyruvate is bound at residue Thr43. Residue Tyr131 is the Proton donor/acceptor of the active site. The active-site Schiff-base intermediate with substrate is Lys160. Val200 is a pyruvate binding site.

Belongs to the DapA family. In terms of assembly, homotetramer; dimer of dimers.

It localises to the cytoplasm. The enzyme catalyses L-aspartate 4-semialdehyde + pyruvate = (2S,4S)-4-hydroxy-2,3,4,5-tetrahydrodipicolinate + H2O + H(+). The protein operates within amino-acid biosynthesis; L-lysine biosynthesis via DAP pathway; (S)-tetrahydrodipicolinate from L-aspartate: step 3/4. In terms of biological role, catalyzes the condensation of (S)-aspartate-beta-semialdehyde [(S)-ASA] and pyruvate to 4-hydroxy-tetrahydrodipicolinate (HTPA). This is 4-hydroxy-tetrahydrodipicolinate synthase from Methanococcus maripaludis (strain C5 / ATCC BAA-1333).